A 253-amino-acid chain; its full sequence is Imidazole glycerol phosphate synthase subunit HisF (253 aa).

Active-site residues include aspartate 13 and aspartate 132.

Belongs to the HisA/HisF family. Heterodimer of HisH and HisF.

Its subcellular location is the cytoplasm. The enzyme catalyses 5-[(5-phospho-1-deoxy-D-ribulos-1-ylimino)methylamino]-1-(5-phospho-beta-D-ribosyl)imidazole-4-carboxamide + L-glutamine = D-erythro-1-(imidazol-4-yl)glycerol 3-phosphate + 5-amino-1-(5-phospho-beta-D-ribosyl)imidazole-4-carboxamide + L-glutamate + H(+). The protein operates within amino-acid biosynthesis; L-histidine biosynthesis; L-histidine from 5-phospho-alpha-D-ribose 1-diphosphate: step 5/9. IGPS catalyzes the conversion of PRFAR and glutamine to IGP, AICAR and glutamate. The HisF subunit catalyzes the cyclization activity that produces IGP and AICAR from PRFAR using the ammonia provided by the HisH subunit. The protein is Imidazole glycerol phosphate synthase subunit HisF of Aliarcobacter butzleri (strain RM4018) (Arcobacter butzleri).